We begin with the raw amino-acid sequence, 453 residues long: Chromosomal replication initiator protein DnaA (453 aa).

Residues 1–73 form a domain I, interacts with DnaA modulators region; it reads MNISPQYLWN…AQEVASVVGY (73 aa). The segment at 73-112 is domain II; the sequence is YPVDIQLTTAEGETMAMTGEAQSYQEKSLTQIAPESPKLN. Residues 113–329 form a domain III, AAA+ region region; it reads QLNPRYTFSR…GALIRAIAYT (217 aa). The ATP site is built by glycine 157, glycine 159, lysine 160, and threonine 161. The tract at residues 330–453 is domain IV, binds dsDNA; the sequence is SISGLSMTVQ…RINMASRTQS (124 aa).

This sequence belongs to the DnaA family. Oligomerizes as a right-handed, spiral filament on DNA at oriC.

The protein localises to the cytoplasm. In terms of biological role, plays an essential role in the initiation and regulation of chromosomal replication. ATP-DnaA binds to the origin of replication (oriC) to initiate formation of the DNA replication initiation complex once per cell cycle. Binds the DnaA box (a 9 base pair repeat at the origin) and separates the double-stranded (ds)DNA. Forms a right-handed helical filament on oriC DNA; dsDNA binds to the exterior of the filament while single-stranded (ss)DNA is stabiized in the filament's interior. The ATP-DnaA-oriC complex binds and stabilizes one strand of the AT-rich DNA unwinding element (DUE), permitting loading of DNA polymerase. After initiation quickly degrades to an ADP-DnaA complex that is not apt for DNA replication. Binds acidic phospholipids. In Rippkaea orientalis (strain PCC 8801 / RF-1) (Cyanothece sp. (strain PCC 8801)), this protein is Chromosomal replication initiator protein DnaA.